The chain runs to 361 residues: Chorismate synthase (361 aa).

NADP(+)-binding residues include Arg-48 and Arg-54. Residues 125–127 (RSS), 238–239 (NA), Gly-278, 293–297 (KPTSS), and Arg-319 each bind FMN.

This sequence belongs to the chorismate synthase family. In terms of assembly, homotetramer. It depends on FMNH2 as a cofactor.

The catalysed reaction is 5-O-(1-carboxyvinyl)-3-phosphoshikimate = chorismate + phosphate. Its pathway is metabolic intermediate biosynthesis; chorismate biosynthesis; chorismate from D-erythrose 4-phosphate and phosphoenolpyruvate: step 7/7. Functionally, catalyzes the anti-1,4-elimination of the C-3 phosphate and the C-6 proR hydrogen from 5-enolpyruvylshikimate-3-phosphate (EPSP) to yield chorismate, which is the branch point compound that serves as the starting substrate for the three terminal pathways of aromatic amino acid biosynthesis. This reaction introduces a second double bond into the aromatic ring system. The protein is Chorismate synthase of Escherichia coli O1:K1 / APEC.